We begin with the raw amino-acid sequence, 236 residues long: Three prime repair exonuclease 2 (236 aa).

Mg(2+) is bound by residues Asp14 and Glu16. Residues 16-17 (EA) and Tyr122 contribute to the substrate site. His188 functions as the Proton donor/acceptor in the catalytic mechanism. Asp193 serves as a coordination point for Mg(2+). Asp193 contacts substrate.

This sequence belongs to the exonuclease superfamily. TREX family. Homodimer. Mg(2+) serves as cofactor. In terms of tissue distribution, detected in heart, breast, prostate, skeletal muscle, testis, uterus, bone marrow, colon, small intestine, stomach and thymus.

It localises to the nucleus. The enzyme catalyses Exonucleolytic cleavage in the 3'- to 5'-direction to yield nucleoside 5'-phosphates.. Its function is as follows. Exonuclease with a preference for double-stranded DNA with mismatched 3' termini. May play a role in DNA repair. The sequence is that of Three prime repair exonuclease 2 (TREX2) from Homo sapiens (Human).